The following is a 637-amino-acid chain: MTTYFKLVKGATKIKSAPPKQKYLDPILLGTSNEEDFYEIVKGLDSRINDTAWTIVYKSLLVVHLMIREGSKDVALRYYSRNLEFFDIENIRGSNGSASGDMRALDRYDNYLKVRCREFGKIKKDYVRDGYRTLKLNSGNYGSSRNKQHSINIALDHVESLEVQIQALIKNKYTQYDLSNELIIFGFKLLIQDLLALYNALNEGIITLLESFFELSHHNAERTLDLYKTFVDLTEHVVRYLKSGKTAGLKIPVIKHITTKLVRSLEEHLIEDDKTHNTFVPVDSSQGSAGAVVAKSTAQERLEQIREQKRILEAQLKNEQVAISPALTTVTAAQSYNPFGTDSSMHTNIPMAVANQTQQIANNPFVSQTQPQVMNTPTAHTEPANLNVPEYAAVQHTVNFNPVQDAGVSAQQTGYYSINNHLTPTFTGAGFGGYSVSQDTTAASNQQVSHSQTGSNNPFALHNAATIATGNPAHENVLNNPFSRPNFDEQNTNMPLQQQIISNPFQNQTYNQQQFQQQKMPLSSINSVMTTPTSMQGSMNIPQRFDKMEFQAHYTQNHLQQQQQQQQQQQQQQQQQPQQGYYVPATAGANPVTNITGTVQPQNFPFYPQQQPQPEQSQTQQPVLGNQYANNLNLIDM.

The 126-residue stretch at 1 to 126 (MTTYFKLVKG…REFGKIKKDY (126 aa)) folds into the ENTH domain. Residues 555–637 (TQNHLQQQQQ…YANNLNLIDM (83 aa)) form a disordered region. Composition is skewed to low complexity over residues 560–579 (QQQQ…QPQQ) and 600–622 (QPQN…TQQP). The clathrin-binding stretch occupies residues 587–637 (AGANPVTNITGTVQPQNFPFYPQQQPQPEQSQTQQPVLGNQYANNLNLIDM). Residues 623-637 (VLGNQYANNLNLIDM) show a composition bias toward polar residues.

The protein belongs to the AP180 family. As to quaternary structure, interacts with PAN1 and the clathrin heavy and light chains CHC1 and CLC1.

Its subcellular location is the bud. It localises to the bud neck. It is found in the cell membrane. The protein localises to the cytoplasm. Its function is as follows. Involved in endocytosis and clathrin cage assembly. The polypeptide is Clathrin coat assembly protein AP180A (YAP1801) (Saccharomyces cerevisiae (strain ATCC 204508 / S288c) (Baker's yeast)).